The primary structure comprises 414 residues: Riboflavin biosynthesis protein RibBA (414 aa).

The tract at residues 1 to 204 is DHBP synthase; that stretch reads MTRFDTIERA…IADMIAWRRK (204 aa). Residues 28-29, aspartate 33, 141-145, and glutamate 165 each bind D-ribulose 5-phosphate; these read RE and RPGHT. Glutamate 29 lines the Mg(2+) pocket. Histidine 144 contributes to the Mg(2+) binding site. The segment at 205 to 414 is GTP cyclohydrolase II; sequence HEKQVVRVAE…DDLDLGETAQ (210 aa). Position 255 to 259 (255 to 259) interacts with GTP; the sequence is RVHSE. 3 residues coordinate Zn(2+): cysteine 260, cysteine 271, and cysteine 273. GTP is bound by residues glutamine 276, 299–301, and threonine 321; that span reads EGR. The active-site Proton acceptor; for GTP cyclohydrolase activity is the aspartate 333. Arginine 335 acts as the Nucleophile; for GTP cyclohydrolase activity in catalysis. GTP contacts are provided by threonine 356 and lysine 361.

This sequence in the N-terminal section; belongs to the DHBP synthase family. In the C-terminal section; belongs to the GTP cyclohydrolase II family. Mg(2+) is required as a cofactor. Requires Mn(2+) as cofactor. Zn(2+) serves as cofactor.

It carries out the reaction D-ribulose 5-phosphate = (2S)-2-hydroxy-3-oxobutyl phosphate + formate + H(+). The catalysed reaction is GTP + 4 H2O = 2,5-diamino-6-hydroxy-4-(5-phosphoribosylamino)-pyrimidine + formate + 2 phosphate + 3 H(+). It participates in cofactor biosynthesis; riboflavin biosynthesis; 2-hydroxy-3-oxobutyl phosphate from D-ribulose 5-phosphate: step 1/1. Its pathway is cofactor biosynthesis; riboflavin biosynthesis; 5-amino-6-(D-ribitylamino)uracil from GTP: step 1/4. Catalyzes the conversion of D-ribulose 5-phosphate to formate and 3,4-dihydroxy-2-butanone 4-phosphate. In terms of biological role, catalyzes the conversion of GTP to 2,5-diamino-6-ribosylamino-4(3H)-pyrimidinone 5'-phosphate (DARP), formate and pyrophosphate. The protein is Riboflavin biosynthesis protein RibBA of Nocardia farcinica (strain IFM 10152).